Reading from the N-terminus, the 160-residue chain is Snaclec subunit A (160 aa).

The first 23 residues, Met-1 to Ala-23, serve as a signal peptide directing secretion. Intrachain disulfides connect Cys-25-Cys-36, Cys-53-Cys-150, and Cys-125-Cys-142. Residues Tyr-32–Lys-151 form the C-type lectin domain.

Belongs to the snaclec family. Heterodimer of subunits A and B; disulfide-linked. As to expression, expressed by the venom gland.

The protein localises to the secreted. Its function is as follows. Interferes with one step of hemostasis (modulation of platelet aggregation, or coagulation cascade, for example). The protein is Snaclec subunit A of Philodryas olfersii (Green snake).